Consider the following 601-residue polypeptide: Rhizobactin siderophore biosynthesis protein RhbF (601 aa).

It belongs to the IucA/IucC family.

Its pathway is siderophore biosynthesis; rhizobactin biosynthesis. The chain is Rhizobactin siderophore biosynthesis protein RhbF (rhbF) from Rhizobium meliloti (strain 1021) (Ensifer meliloti).